Reading from the N-terminus, the 295-residue chain is Protease HtpX (295 aa).

The next 2 helical transmembrane spans lie at 4 to 24 (ILLF…TLSL) and 42 to 62 (QLLV…LFIS). His147 serves as a coordination point for Zn(2+). Residue Glu148 is part of the active site. Zn(2+) is bound at residue His151. Transmembrane regions (helical) follow at residues 158-178 (VTLA…ARII) and 195-215 (IAYF…ASAI). Glu224 provides a ligand contact to Zn(2+).

Belongs to the peptidase M48B family. Requires Zn(2+) as cofactor.

The protein resides in the cell inner membrane. This Pseudomonas fluorescens (strain SBW25) protein is Protease HtpX.